The following is a 445-amino-acid chain: Phosphoglucosamine mutase (445 aa).

Residue serine 102 is the Phosphoserine intermediate of the active site. Residues serine 102, aspartate 241, aspartate 243, and aspartate 245 each contribute to the Mg(2+) site. At serine 102 the chain carries Phosphoserine.

Belongs to the phosphohexose mutase family. Mg(2+) serves as cofactor. Activated by phosphorylation.

It catalyses the reaction alpha-D-glucosamine 1-phosphate = D-glucosamine 6-phosphate. Functionally, catalyzes the conversion of glucosamine-6-phosphate to glucosamine-1-phosphate. The protein is Phosphoglucosamine mutase of Pectobacterium atrosepticum (strain SCRI 1043 / ATCC BAA-672) (Erwinia carotovora subsp. atroseptica).